A 342-amino-acid chain; its full sequence is Uroporphyrinogen decarboxylase (342 aa).

Substrate is bound by residues 22 to 26, Phe42, Asp72, Tyr146, Ser201, and His317; that span reads RQAGR.

The protein belongs to the uroporphyrinogen decarboxylase family. In terms of assembly, homodimer.

The protein resides in the cytoplasm. It catalyses the reaction uroporphyrinogen III + 4 H(+) = coproporphyrinogen III + 4 CO2. It participates in porphyrin-containing compound metabolism; protoporphyrin-IX biosynthesis; coproporphyrinogen-III from 5-aminolevulinate: step 4/4. Functionally, catalyzes the decarboxylation of four acetate groups of uroporphyrinogen-III to yield coproporphyrinogen-III. In Orientia tsutsugamushi (strain Ikeda) (Rickettsia tsutsugamushi), this protein is Uroporphyrinogen decarboxylase.